We begin with the raw amino-acid sequence, 225 residues long: 3-dehydroquinate dehydratase (225 aa).

Residues 30-32 (EWR) and arginine 62 contribute to the 3-dehydroquinate site. Histidine 118 serves as the catalytic Proton donor/acceptor. The active-site Schiff-base intermediate with substrate is lysine 143. 3 residues coordinate 3-dehydroquinate: arginine 186, serine 205, and glutamine 209.

It belongs to the type-I 3-dehydroquinase family. Homodimer.

It catalyses the reaction 3-dehydroquinate = 3-dehydroshikimate + H2O. The protein operates within metabolic intermediate biosynthesis; chorismate biosynthesis; chorismate from D-erythrose 4-phosphate and phosphoenolpyruvate: step 3/7. Functionally, involved in the third step of the chorismate pathway, which leads to the biosynthesis of aromatic amino acids. Catalyzes the cis-dehydration of 3-dehydroquinate (DHQ) and introduces the first double bond of the aromatic ring to yield 3-dehydroshikimate. This Streptococcus mutans serotype c (strain ATCC 700610 / UA159) protein is 3-dehydroquinate dehydratase.